A 402-amino-acid chain; its full sequence is Multidrug resistance protein MdtH (402 aa).

11 helical membrane-spanning segments follow: residues 13–33, 34–54, 99–116, 139–159, 165–185, 214–234, 243–263, 277–297, 300–320, 340–360, and 368–388; these read YFLLVDNMLVVLGFFVVFPLI, SIRFVDQMGWAALMVGIALGL, PWLLWFSCFLSGLGGTLF, LLMMQDSAGAVIGALLGSWLL, LVCATGAALFILCAAFNAWLL, VLTLTGYYMLAVQVMLMLPIM, AAVKWMYAIEACLSLTLLYPI, LMAGLLVMTLSMMPIGLVSSV, LFVLICTFYIGSIIAEPARET, LGLALGGALGYAGGGWLFDSG, and LPWVMLGVVGFITLIALWWQF.

Belongs to the major facilitator superfamily. DHA1 family. MdtH (TC 2.A.1.2.21) subfamily.

The protein resides in the cell inner membrane. The chain is Multidrug resistance protein MdtH from Enterobacter sp. (strain 638).